The chain runs to 238 residues: Ribosomal RNA small subunit methyltransferase G (238 aa).

Residues Gly77, Phe82, 128–129 (AE), and Arg147 each bind S-adenosyl-L-methionine.

This sequence belongs to the methyltransferase superfamily. RNA methyltransferase RsmG family.

It localises to the cytoplasm. In terms of biological role, specifically methylates the N7 position of guanine in position 535 of 16S rRNA. In Listeria monocytogenes serotype 4b (strain F2365), this protein is Ribosomal RNA small subunit methyltransferase G.